The sequence spans 186 residues: Phosphoheptose isomerase (186 aa).

Residues 33 to 186 (LCECLKKGGK…TLCQIIDEGF (154 aa)) enclose the SIS domain. 48-50 (NGG) is a binding site for substrate. Residues His-57 and Glu-61 each coordinate Zn(2+). Substrate is bound by residues Glu-61, 90–91 (ND), 116–118 (STS), Ser-121, and Gln-168. Zn(2+) contacts are provided by Gln-168 and His-176.

The protein belongs to the SIS family. GmhA subfamily. In terms of assembly, homotetramer. Requires Zn(2+) as cofactor.

The protein localises to the cytoplasm. It carries out the reaction 2 D-sedoheptulose 7-phosphate = D-glycero-alpha-D-manno-heptose 7-phosphate + D-glycero-beta-D-manno-heptose 7-phosphate. The protein operates within carbohydrate biosynthesis; D-glycero-D-manno-heptose 7-phosphate biosynthesis; D-glycero-alpha-D-manno-heptose 7-phosphate and D-glycero-beta-D-manno-heptose 7-phosphate from sedoheptulose 7-phosphate: step 1/1. Its function is as follows. Catalyzes the isomerization of sedoheptulose 7-phosphate in D-glycero-D-manno-heptose 7-phosphate. In Campylobacter jejuni subsp. jejuni serotype O:6 (strain 81116 / NCTC 11828), this protein is Phosphoheptose isomerase.